Reading from the N-terminus, the 176-residue chain is Translation initiation factor IF-3 (176 aa).

Belongs to the IF-3 family. As to quaternary structure, monomer.

Its subcellular location is the cytoplasm. IF-3 binds to the 30S ribosomal subunit and shifts the equilibrium between 70S ribosomes and their 50S and 30S subunits in favor of the free subunits, thus enhancing the availability of 30S subunits on which protein synthesis initiation begins. In Streptococcus equi subsp. zooepidemicus (strain H70), this protein is Translation initiation factor IF-3.